We begin with the raw amino-acid sequence, 473 residues long: Monocarboxylate transporter 4 (473 aa).

Residues 1–17 lie on the Cytoplasmic side of the membrane; the sequence is MGAVVVDDGPSGVKAPD. Residues 18 to 38 traverse the membrane as a helical segment; that stretch reads GGWGWAVLFGCFIITGFSYAF. Topologically, residues 39–61 are extracellular; the sequence is PKAVSVFFKELIREFGVGYSDTA. Residues 62–82 traverse the membrane as a helical segment; sequence WISSILLAMLYGTGPLCSVCV. Residues 83–91 lie on the Cytoplasmic side of the membrane; sequence NRFGCRPVM. A helical transmembrane segment spans residues 92 to 112; sequence LVGGLFASMGMVIASFCTSIV. Residues 113–115 are Extracellular-facing; it reads QIY. A helical membrane pass occupies residues 116–136; the sequence is LTAGVITGLGLALNFQPSLIM. At 137 to 149 the chain is on the cytoplasmic side; the sequence is LNRYFDKRRPLAN. Residues 150–170 traverse the membrane as a helical segment; sequence GLSAAGSPVFLCALSPLGQIL. At 171-179 the chain is on the extracellular side; it reads QHEYGWRGG. A helical membrane pass occupies residues 180–200; it reads FLILGGMLLNCCVCGALMRPL. The Cytoplasmic portion of the chain corresponds to 201-231; it reads EPPKKSEATKEPAEKKAKKKLLDFSVFKDGG. Residues 232–252 form a helical membrane-spanning segment; that stretch reads FVIYTLAASIMVLGLFVPPVF. The Extracellular segment spans residues 253-268; sequence VVSYAKDLGYQDTKAA. A helical membrane pass occupies residues 269 to 289; the sequence is FLLTILGFIDIFARPICGMVA. Over 290–297 the chain is Cytoplasmic; the sequence is GLKWVRPR. The helical transmembrane segment at 298-318 threads the bilayer; that stretch reads CVYLFSFAMIFNGFTDLMGSM. The Extracellular segment spans residues 319-321; sequence SVD. Residues 322 to 342 form a helical membrane-spanning segment; the sequence is YGGLVVFCIFFGISYGMVGAL. Residues 343-358 are Cytoplasmic-facing; it reads QFEVLMAIVGTQKFSS. A helical transmembrane segment spans residues 359-379; that stretch reads AIGLVLLAEAMAVLIGPPSAG. The Extracellular segment spans residues 380 to 388; the sequence is KLLDLTRRY. A helical membrane pass occupies residues 389 to 409; it reads MFVFIIAGIEVTTSALVLALG. The Cytoplasmic portion of the chain corresponds to 410 to 473; the sequence is NFFCIKKKPA…EVVTNPETCV (64 aa). A disordered region spans residues 421 to 447; that stretch reads PHTKEAAAEREELNKSEDKTPEDAKVD. Basolateral sorting signal stretches follow at residues 427–449 and 449–473; these read AAER…VDSI and IEVE…ETCV.

It belongs to the major facilitator superfamily. Monocarboxylate porter (TC 2.A.1.13) family. As to quaternary structure, interacts with BSG; interaction mediates SLC16A3 targeting to the plasma membrane.

Its subcellular location is the cell membrane. It is found in the basolateral cell membrane. It catalyses the reaction (S)-lactate(in) + H(+)(in) = (S)-lactate(out) + H(+)(out). The enzyme catalyses pyruvate(out) + H(+)(out) = pyruvate(in) + H(+)(in). In terms of biological role, proton-dependent transporter of monocarboxylates such as L-lactate and pyruvate. Plays a predominant role in the L-lactate efflux from highly glycolytic cells. This is Monocarboxylate transporter 4 (SLC16A3) from Gallus gallus (Chicken).